A 579-amino-acid chain; its full sequence is Mycobactin import ATP-binding/permease protein IrtB (579 aa).

Residues 1–16 (MIRTWIALVPNDHRAR) are Cytoplasmic-facing. Residues 17-37 (LIGFALLAFCSVVARAVGTVL) traverse the membrane as a helical segment. Residues 17–299 (LIGFALLAFC…VSELAPALES (283 aa)) form the ABC transmembrane type-1 domain. At 38–52 (LVPLMAALFGEAPQR) the chain is on the periplasmic side. A helical membrane pass occupies residues 53–73 (AWLWLGWLSAATVAGWVLDAV). The Cytoplasmic portion of the chain corresponds to 74-123 (TARIGIELGFAVLNHTQHDVADRLPVVRLDWFTAENTATARQAIAATGPE). Residues 124–146 (LVGLVVNLVTPLTSAILLPAVIA) traverse the membrane as a helical segment. Over 147-155 (LALLPISWQ) the chain is Periplasmic. Residues 156 to 178 (LGVAALAGVPLLLGALWASAAFA) traverse the membrane as a helical segment. At 179–237 (RRADTAADKANTALTERIIEFARTQQALRAARRVEPARSLVGNALASQHTATMRLLGMQ) the chain is on the cytoplasmic side. Residues 238–258 (IPGQLLFSIASQLALIVLAGT) traverse the membrane as a helical segment. The Periplasmic segment spans residues 259-579 (TAALTITGTL…EAAEWQILAE (321 aa)). Positions 332–567 (IEFDDVAFGY…GGRFSQFWRQ (236 aa)) constitute an ABC transporter domain. An ATP-binding site is contributed by 366-373 (GPSGCGKS).

This sequence belongs to the ABC transporter superfamily. Siderophore-Fe(3+) uptake transporter (SIUT) (TC 3.A.1.21) family. As to quaternary structure, forms a heterodimer with IrtA.

Its subcellular location is the cell inner membrane. Functionally, part of the ABC transporter complex IrtAB involved in the import of iron-bound mycobactin (Fe-MBT) and carboxymycobactin (Fe-cMBT). Transmembrane domains (TMD) form a pore in the membrane and the ATP-binding domain (NBD) is responsible for energy generation. The sequence is that of Mycobactin import ATP-binding/permease protein IrtB (irtB) from Mycobacterium bovis (strain ATCC BAA-935 / AF2122/97).